The chain runs to 91 residues: Small membrane A-kinase anchor protein (91 aa).

G2 carries the N-myristoyl glycine lipid modification.

Belongs to the small membrane AKAP family. In terms of processing, may be palmitoylated at Cys-3.

Its subcellular location is the cell membrane. In terms of biological role, binds to type I regulatory subunits of protein kinase A and may anchor/target them to the plasma membrane. The sequence is that of Small membrane A-kinase anchor protein from Xenopus laevis (African clawed frog).